A 162-amino-acid chain; its full sequence is Proepiregulin (162 aa).

Positions 1–22 are cleaved as a signal peptide; that stretch reads METLPASWVLTLLCLGSHLLQA. The propeptide occupies 23–55; it reads VISTTVIPSCIPGESEDNCTALVQMEDDPRVAQ. A glycan (N-linked (GlcNAc...) asparagine) is linked at Asn-40. At 53–112 the chain is on the extracellular side; it reads VAQVQITKCSSDMDGYCLHGQCIYLVDMREKFCRCEVGYTGLRCEHFFLTVHQPLSKEYV. Positions 57 to 97 constitute an EGF-like domain; it reads QITKCSSDMDGYCLHGQCIYLVDMREKFCRCEVGYTGLRCE. Disulfide bonds link Cys-61/Cys-74, Cys-69/Cys-85, and Cys-87/Cys-96. The propeptide at 102-162 is removed in mature form; that stretch reads TVHQPLSKEY…TSGDPVLPQV (61 aa). Residues 113 to 133 form a helical membrane-spanning segment; sequence ALTVILIFLFLIITAGCIYYF. Over 134 to 162 the chain is Cytoplasmic; the sequence is CRWYKNRKSKKSREEYERVTSGDPVLPQV.

Interacts with EGFR and ERBB4.

The protein localises to the secreted. The protein resides in the extracellular space. Its subcellular location is the cell membrane. Ligand of the EGF receptor/EGFR and ERBB4. Stimulates EGFR and ERBB4 tyrosine phosphorylation. Contributes to inflammation, wound healing, tissue repair, and oocyte maturation by regulating angiogenesis and vascular remodeling and by stimulating cell proliferation. This Mus musculus (Mouse) protein is Proepiregulin (Ereg).